Consider the following 63-residue polypeptide: Cecropin-B (63 aa).

Residues methionine 1–glutamate 22 form the signal peptide. At arginine 62 the chain carries Arginine amide.

This sequence belongs to the cecropin family.

Its subcellular location is the secreted. Functionally, cecropins have lytic and antibacterial activity against several Gram-positive and Gram-negative bacteria. This chain is Cecropin-B (CecB), found in Drosophila simulans (Fruit fly).